The following is a 564-amino-acid chain: 60 kDa lysophospholipase (564 aa).

The 347-residue stretch at 9–355 (RRLLAIYTGG…NDRKKLLAKD (347 aa)) folds into the Asparaginase/glutaminase domain. T19 functions as the Acyl-ester intermediate in the catalytic mechanism. Residues 41 to 350 (TLHMFHDEEY…PGLSLNDRKK (310 aa)) form an asparaginase region. Substrate contacts are provided by residues 84 to 86 (DSS) and 116 to 117 (TD). ANK repeat units follow at residues 141–170 (GAQVPIHALWSDGRENLLGALLMAGQYVIP), 396–426 (VLLPGLALAAAHAGDLDTLQAFVELDRDLNL), 430–459 (SGQTPLHVAARRGHAAVVTMLLQRGADVDA), 463–492 (DGQSPLLLAVRGRHQSVIGLLRAAGARLSP), and 530–559 (DGHCALQVAEAAGNADVVALLQSFKDSVCA). The residue at position 478 (S478) is a Phosphoserine.

In the N-terminal section; belongs to the asparaginase 1 family. As to quaternary structure, monomer.

It catalyses the reaction a 1-acyl-sn-glycero-3-phosphocholine + H2O = sn-glycerol 3-phosphocholine + a fatty acid + H(+). The catalysed reaction is L-asparagine + H2O = L-aspartate + NH4(+). The enzyme catalyses a 1-O-alkyl-2-acetyl-sn-glycero-3-phosphocholine + H2O = a 1-O-alkyl-sn-glycero-3-phosphocholine + acetate + H(+). It carries out the reaction 1-hexadecanoyl-sn-glycero-3-phosphocholine + H2O = sn-glycerol 3-phosphocholine + hexadecanoate + H(+). It catalyses the reaction 2 1-hexadecanoyl-sn-glycero-3-phosphocholine = 1,2-dihexadecanoyl-sn-glycero-3-phosphocholine + sn-glycerol 3-phosphocholine. The catalysed reaction is 1-octadecanoyl-sn-glycero-3-phosphocholine + H2O = octadecanoate + sn-glycerol 3-phosphocholine + H(+). The enzyme catalyses 1-(9Z-octadecenoyl)-sn-glycero-3-phosphocholine + H2O = sn-glycerol 3-phosphocholine + (9Z)-octadecenoate + H(+). It carries out the reaction 1-hexadecanoyl-sn-glycero-3-phosphoethanolamine + H2O = sn-glycero-3-phosphoethanolamine + hexadecanoate + H(+). It catalyses the reaction 1-(9Z-octadecenoyl)-sn-glycero-3-phosphoethanolamine + H2O = sn-glycero-3-phosphoethanolamine + (9Z)-octadecenoate + H(+). The catalysed reaction is 1-hexadecanoyl-sn-glycero-3-phosphoethanolamine + 1-hexadecanoyl-sn-glycero-3-phosphocholine = 1,2-dihexadecanoyl-sn-glycero-3-phosphoethanolamine + sn-glycerol 3-phosphocholine. The enzyme catalyses 2-(5Z,8Z,11Z,14Z)-eicosatetraenoyl-sn-glycero-3-phosphocholine + H2O = sn-glycerol 3-phosphocholine + (5Z,8Z,11Z,14Z)-eicosatetraenoate + H(+). It carries out the reaction 2-hexadecanoyl-sn-glycero-3-phosphocholine + H2O = sn-glycerol 3-phosphocholine + hexadecanoate + H(+). It catalyses the reaction 2 2-hexadecanoyl-sn-glycero-3-phosphocholine = 1,2-dihexadecanoyl-sn-glycero-3-phosphocholine + sn-glycerol 3-phosphocholine. The catalysed reaction is 1-O-(9Z)-octadecenoyl-2-O-acetyl-sn-glycero-3-phosphocholine + H2O = 2-acetyl-sn-glycero-3-phosphocholine + (9Z)-octadecenoate + H(+). The enzyme catalyses a 1-acyl-sn-glycero-3-phospho-(1D-myo-inositol) + 1-hexadecanoyl-sn-glycero-3-phosphocholine = a 1-acyl-2-hexadecanoyl-sn-glycero-3-phospho-(1D-myo-inositol) + sn-glycerol 3-phosphocholine. It carries out the reaction 2 2-(5Z,8Z,11Z,14Z)-eicosatetraenoyl-sn-glycero-3-phosphocholine = 1,2-di-(5Z,8Z,11Z,14Z-eicosatetraenoyl)-sn-glycero-3-phosphocholine + sn-glycerol 3-phosphocholine. Exhibits lysophospholipase, transacylase, PAF acetylhydrolase and asparaginase activities. Can catalyze three types of transacylation reactions: (1) acyl transfer from 1-acyl-sn-glycero-3-phosphocholine (1-acyl-GPC) to the sn-1(3) positions of glycerol and 2-acylglycerol (sn-1 to -1(3) transfer), (2) acyl transfer from 1-acyl-GPC to the sn-2 positions of 1-acyl-GPC, 1-acyl-sn-glycero-3-phosphoethanolamine (1-acyl-GPE), and other lysophospholipids (sn-1 to -2 transfer) and (3) acyl transfer from 2-acyl-GPC to the sn-1 position of 2-acyl-GPC and 2-acyl-GPE (sn-2 to -1 transfer). Mediates the synthesis of 1-arachidonoyl species of phospholipids by transferring the arachidonoyl residue from 2-arachidonoyl lysophospholipid to the sn-1 position of 2-acyl lysophospholipid. The protein is 60 kDa lysophospholipase (Aspg) of Mus musculus (Mouse).